A 255-amino-acid chain; its full sequence is S-adenosyl-L-methionine-dependent uroporphyrinogen III methyltransferase (255 aa).

S-adenosyl-L-homocysteine is bound by residues Pro-15, 91–93 (GGD), 121–122 (TS), Met-175, and Ala-232.

This sequence belongs to the precorrin methyltransferase family. As to quaternary structure, homodimer.

It carries out the reaction uroporphyrinogen III + 2 S-adenosyl-L-methionine = precorrin-2 + 2 S-adenosyl-L-homocysteine + H(+). The protein operates within porphyrin-containing compound metabolism; siroheme biosynthesis; precorrin-2 from uroporphyrinogen III: step 1/1. In terms of biological role, involved in the archaeal biosynthesis of heme. Catalyzes the methylation of carbons 2 and 7 of uroporphyrinogen-III (UROGEN) to yield precorrin-2. It does not catalyze the overmethylation of precorrin-2 to trimethylpyrrocorphin. In Methanosarcina barkeri (strain Fusaro / DSM 804), this protein is S-adenosyl-L-methionine-dependent uroporphyrinogen III methyltransferase.